The sequence spans 230 residues: Ribonuclease 3 (230 aa).

An RNase III domain is found at 10–133 (DPRLLSRIGY…IIGAIYLDSS (124 aa)). Glu46 serves as a coordination point for Mg(2+). Residue Asp50 is part of the active site. Mg(2+) is bound by residues Asp119 and Glu122. Glu122 is a catalytic residue. The DRBM domain occupies 161–230 (DPKSRLQEYL…AAEILKLLEQ (70 aa)).

It belongs to the ribonuclease III family. As to quaternary structure, homodimer. It depends on Mg(2+) as a cofactor.

It is found in the cytoplasm. The catalysed reaction is Endonucleolytic cleavage to 5'-phosphomonoester.. In terms of biological role, digests double-stranded RNA. Involved in the processing of primary rRNA transcript to yield the immediate precursors to the large and small rRNAs (23S and 16S). Processes some mRNAs, and tRNAs when they are encoded in the rRNA operon. Processes pre-crRNA and tracrRNA of type II CRISPR loci if present in the organism. In Acinetobacter baumannii (strain SDF), this protein is Ribonuclease 3.